Reading from the N-terminus, the 556-residue chain is Formate--tetrahydrofolate ligase (556 aa).

Thr-65–Thr-72 is an ATP binding site.

Belongs to the formate--tetrahydrofolate ligase family.

It catalyses the reaction (6S)-5,6,7,8-tetrahydrofolate + formate + ATP = (6R)-10-formyltetrahydrofolate + ADP + phosphate. The protein operates within one-carbon metabolism; tetrahydrofolate interconversion. The chain is Formate--tetrahydrofolate ligase from Clostridium acidurici (Gottschalkia acidurici).